The following is a 940-amino-acid chain: Isoleucine--tRNA ligase (940 aa).

A 'HIGH' region motif is present at residues 58–68 (PYANGSIHIGH). L-isoleucyl-5'-AMP is bound at residue Glu-564. The 'KMSKS' region motif lies at 605-609 (KMSKS). Lys-608 contacts ATP. Positions 903, 906, 923, and 926 each coordinate Zn(2+).

Belongs to the class-I aminoacyl-tRNA synthetase family. IleS type 1 subfamily. Monomer. Zn(2+) is required as a cofactor.

It is found in the cytoplasm. The catalysed reaction is tRNA(Ile) + L-isoleucine + ATP = L-isoleucyl-tRNA(Ile) + AMP + diphosphate. Its function is as follows. Catalyzes the attachment of isoleucine to tRNA(Ile). As IleRS can inadvertently accommodate and process structurally similar amino acids such as valine, to avoid such errors it has two additional distinct tRNA(Ile)-dependent editing activities. One activity is designated as 'pretransfer' editing and involves the hydrolysis of activated Val-AMP. The other activity is designated 'posttransfer' editing and involves deacylation of mischarged Val-tRNA(Ile). This chain is Isoleucine--tRNA ligase, found in Shewanella sp. (strain MR-7).